The sequence spans 130 residues: Small ribosomal subunit protein uS11 (130 aa).

Belongs to the universal ribosomal protein uS11 family. As to quaternary structure, part of the 30S ribosomal subunit. Interacts with proteins S7 and S18. Binds to IF-3.

Functionally, located on the platform of the 30S subunit, it bridges several disparate RNA helices of the 16S rRNA. Forms part of the Shine-Dalgarno cleft in the 70S ribosome. The protein is Small ribosomal subunit protein uS11 of Blochmanniella floridana.